Consider the following 616-residue polypeptide: Dihydroxy-acid dehydratase (616 aa).

Aspartate 81 serves as a coordination point for Mg(2+). Cysteine 122 serves as a coordination point for [2Fe-2S] cluster. Aspartate 123 and lysine 124 together coordinate Mg(2+). N6-carboxylysine is present on lysine 124. Cysteine 195 serves as a coordination point for [2Fe-2S] cluster. Glutamate 491 is a Mg(2+) binding site. The active-site Proton acceptor is serine 517.

Belongs to the IlvD/Edd family. In terms of assembly, homodimer. The cofactor is [2Fe-2S] cluster. It depends on Mg(2+) as a cofactor.

The enzyme catalyses (2R)-2,3-dihydroxy-3-methylbutanoate = 3-methyl-2-oxobutanoate + H2O. The catalysed reaction is (2R,3R)-2,3-dihydroxy-3-methylpentanoate = (S)-3-methyl-2-oxopentanoate + H2O. The protein operates within amino-acid biosynthesis; L-isoleucine biosynthesis; L-isoleucine from 2-oxobutanoate: step 3/4. It functions in the pathway amino-acid biosynthesis; L-valine biosynthesis; L-valine from pyruvate: step 3/4. Its function is as follows. Functions in the biosynthesis of branched-chain amino acids. Catalyzes the dehydration of (2R,3R)-2,3-dihydroxy-3-methylpentanoate (2,3-dihydroxy-3-methylvalerate) into 2-oxo-3-methylpentanoate (2-oxo-3-methylvalerate) and of (2R)-2,3-dihydroxy-3-methylbutanoate (2,3-dihydroxyisovalerate) into 2-oxo-3-methylbutanoate (2-oxoisovalerate), the penultimate precursor to L-isoleucine and L-valine, respectively. The polypeptide is Dihydroxy-acid dehydratase (Salmonella agona (strain SL483)).